A 471-amino-acid chain; its full sequence is 7-hydroxymethyl chlorophyll a reductase, chloroplastic (471 aa).

The N-terminal 44 residues, 1–44 (MARCISFLSTSSSLPCATKPPCCSVSSVLPSSPSSHQCRGRKTS), are a transit peptide targeting the chloroplast.

Belongs to the FrhB family. FAD is required as a cofactor. The cofactor is iron-sulfur cluster.

The protein resides in the plastid. It is found in the chloroplast. It carries out the reaction chlorophyll a + 2 oxidized [2Fe-2S]-[ferredoxin] + H2O = 7(1)-hydroxychlorophyll a + 2 reduced [2Fe-2S]-[ferredoxin] + 2 H(+). Its function is as follows. Probable iron-sulfur flavoprotein that converts 7-hydroxymethyl chlorophyll a to chlorophyll a using ferredoxin as a reducing equivalent. Catalyzes the reduction of a hydroxymethyl group to a methyl group. This is 7-hydroxymethyl chlorophyll a reductase, chloroplastic (HCAR) from Oryza sativa subsp. japonica (Rice).